The sequence spans 444 residues: Putative methylesterase 15, chloroplastic (444 aa).

Positions 1 to 27 are enriched in polar residues; that stretch reads MGNSLRCISQEQDPNQKKPSSVVNGNS. 2 disordered regions span residues 1 to 36 and 48 to 91; these read MGNS…RRLS and PSLS…DSLI. The transit peptide at 1 to 58 directs the protein to the chloroplast; that stretch reads MGNSLRCISQEQDPNQKKPSSVVNGNSSEKHVRRLSLIPSFRRRTLLPSLSCSGSSTS. The span at 53-63 shows a compositional bias: low complexity; the sequence is SGSSTSSTSKK. Basic residues predominate over residues 64 to 80; that stretch reads GGIKTKKKIRERHHQEQ. A compositionally biased stretch (basic and acidic residues) spans 81–90; sequence HHHDHEKDSL. Residues 188 to 312 enclose the AB hydrolase-1 domain; the sequence is FVLVHGGGFG…QPDSNYDLME (125 aa). Asp-262 functions as the Acyl-ester intermediate in the catalytic mechanism. Catalysis depends on charge relay system residues Asp-390 and His-418.

This sequence belongs to the AB hydrolase superfamily. Methylesterase family.

It localises to the plastid. It is found in the chloroplast. Putative methylesterase. In Arabidopsis thaliana (Mouse-ear cress), this protein is Putative methylesterase 15, chloroplastic.